Consider the following 449-residue polypeptide: Phosphoglucosamine mutase (449 aa).

Residue Ser-103 is the Phosphoserine intermediate of the active site. Residues Ser-103, Asp-240, Asp-242, and Asp-244 each contribute to the Mg(2+) site. Ser-103 carries the phosphoserine modification.

Belongs to the phosphohexose mutase family. The cofactor is Mg(2+). Post-translationally, activated by phosphorylation.

The enzyme catalyses alpha-D-glucosamine 1-phosphate = D-glucosamine 6-phosphate. Functionally, catalyzes the conversion of glucosamine-6-phosphate to glucosamine-1-phosphate. This chain is Phosphoglucosamine mutase, found in Thermobifida fusca (strain YX).